The chain runs to 814 residues: DNA replication licensing factor Mcm6 (814 aa).

The C4-type zinc finger occupies Cys152–Cys179. The MCM domain occupies Leu339 to Ile545. Positions 392, 393, 394, 395, 396, and 497 each coordinate ATP. Positions Ser521–Asp524 match the Arginine finger motif. Residues Arg612 and Glu615 each coordinate ADP. Residues Asp656 to Ala696 form a disordered region. The span at Leu659 to Glu679 shows a compositional bias: acidic residues.

This sequence belongs to the MCM family. Component of the Mcm2-7 complex. The complex forms a toroidal hexameric ring with the proposed subunit order Mcm2-Mcm6-Mcm4-Mcm7-Mcm3-Mcm5 (By simililarity). The heterodimers of Mcm4/Mcm6 and Mcm3/Mcm5 interact with Mcm2 and Mcm7.

Its subcellular location is the nucleus. It catalyses the reaction ATP + H2O = ADP + phosphate + H(+). Its function is as follows. Acts as a component of the MCM2-7 complex (MCM complex) which is the replicative helicase essential for 'once per cell cycle' DNA replication initiation and elongation in eukaryotic cells. Core component of CDC45-MCM-GINS (CMG) helicase, the molecular machine that unwinds template DNA during replication, and around which the replisome is built. The active ATPase sites in the MCM2-7 ring are formed through the interaction surfaces of two neighboring subunits such that a critical structure of a conserved arginine finger motif is provided in trans relative to the ATP-binding site of the Walker A box of the adjacent subunit. The six ATPase active sites, however, are likely to contribute differentially to the complex helicase activity. The chain is DNA replication licensing factor Mcm6 from Anopheles gambiae (African malaria mosquito).